A 1130-amino-acid chain; its full sequence is Alpha-mannosidase 2 (1130 aa).

The Cytoplasmic segment spans residues 1–14; sequence MRTRVLRCRPFSTR. A helical; Signal-anchor for type II membrane protein membrane pass occupies residues 15–35; that stretch reads ILLLLLFVLAFGVYCYFYNAS. Residues 36-1130 are Lumenal-facing; sequence PQNYNKPRIS…MEVKTYKIRF (1095 aa). N-linked (GlcNAc...) asparagine glycosylation is present at Asn-117. Zn(2+) is bound by residues His-133 and Asp-135. Asn-166 carries an N-linked (GlcNAc...) asparagine glycan. Residues Asp-247 and His-527 each contribute to the Zn(2+) site. Catalysis depends on Asp-247, which acts as the Nucleophile. Residues Asn-622, Asn-683, Asn-1056, and Asn-1095 are each glycosylated (N-linked (GlcNAc...) asparagine).

It belongs to the glycosyl hydrolase 38 family. Homodimer; disulfide-linked. The cofactor is Zn(2+). Post-translationally, N-glycosylated.

The protein resides in the microsome membrane. It localises to the golgi apparatus membrane. The catalysed reaction is N(4)-{beta-D-GlcNAc-(1-&gt;2)-alpha-D-Man-(1-&gt;3)-[alpha-D-Man-(1-&gt;3)-[alpha-D-Man-(1-&gt;6)]-alpha-D-Man-(1-&gt;6)]-beta-D-Man-(1-&gt;4)-beta-D-GlcNAc-(1-&gt;4)-beta-D-GlcNAc}-L-asparaginyl-[protein] + 2 H2O = 2 alpha-D-mannopyranose + an N(4)-{beta-D-GlcNAc-(1-&gt;2)-alpha-D-Man-(1-&gt;3)-[alpha-D-Man-(1-&gt;6)]-beta-D-Man-(1-&gt;4)-beta-D-GlcNAc-(1-&gt;4)-beta-D-GlcNAc}-L-asparaginyl-[protein]. The protein operates within protein modification; protein glycosylation. Inhibited by swainsonine. Functionally, catalyzes the first committed step in the biosynthesis of complex N-glycans. It controls conversion of high mannose to complex N-glycans; the final hydrolytic step in the N-glycan maturation pathway. This chain is Alpha-mannosidase 2, found in Spodoptera frugiperda (Fall armyworm).